The following is a 137-amino-acid chain: ATP synthase epsilon chain (137 aa).

The protein belongs to the ATPase epsilon chain family. In terms of assembly, F-type ATPases have 2 components, CF(1) - the catalytic core - and CF(0) - the membrane proton channel. CF(1) has five subunits: alpha(3), beta(3), gamma(1), delta(1), epsilon(1). CF(0) has three main subunits: a, b and c.

It is found in the cell inner membrane. In terms of biological role, produces ATP from ADP in the presence of a proton gradient across the membrane. This Ruegeria sp. (strain TM1040) (Silicibacter sp.) protein is ATP synthase epsilon chain.